Consider the following 118-residue polypeptide: Basic phospholipase A2 PA-9C (118 aa).

Intrachain disulfides connect Cys11–Cys71, Cys27–Cys117, Cys29–Cys45, Cys44–Cys98, Cys51–Cys91, Cys60–Cys84, and Cys78–Cys89. The Ca(2+) site is built by Tyr28, Gly30, and Gly32. The active site involves His48. Position 49 (Asp49) interacts with Ca(2+). Asp92 is an active-site residue.

The protein belongs to the phospholipase A2 family. Group I subfamily. D49 sub-subfamily. Ca(2+) is required as a cofactor. As to expression, expressed by the venom gland.

It localises to the secreted. The enzyme catalyses a 1,2-diacyl-sn-glycero-3-phosphocholine + H2O = a 1-acyl-sn-glycero-3-phosphocholine + a fatty acid + H(+). PLA2 catalyzes the calcium-dependent hydrolysis of the 2-acyl groups in 3-sn-phosphoglycerides. In Pseudechis australis (Mulga snake), this protein is Basic phospholipase A2 PA-9C.